The primary structure comprises 357 residues: DNA replication and repair protein RecF (357 aa).

31–38 is a binding site for ATP; sequence GQNGAGKT.

Belongs to the RecF family.

Its subcellular location is the cytoplasm. Functionally, the RecF protein is involved in DNA metabolism; it is required for DNA replication and normal SOS inducibility. RecF binds preferentially to single-stranded, linear DNA. It also seems to bind ATP. The polypeptide is DNA replication and repair protein RecF (Coxiella burnetii (strain RSA 493 / Nine Mile phase I)).